We begin with the raw amino-acid sequence, 384 residues long: Alanine racemase (384 aa).

The active-site Proton acceptor; specific for D-alanine is lysine 42. Lysine 42 is subject to N6-(pyridoxal phosphate)lysine. Residue arginine 140 participates in substrate binding. The active-site Proton acceptor; specific for L-alanine is the tyrosine 271. Methionine 319 is a binding site for substrate.

This sequence belongs to the alanine racemase family. Homodimer. Pyridoxal 5'-phosphate is required as a cofactor.

The enzyme catalyses L-alanine = D-alanine. Its pathway is amino-acid biosynthesis; D-alanine biosynthesis; D-alanine from L-alanine: step 1/1. Functionally, catalyzes the interconversion of L-alanine and D-alanine. In Mycobacterium tuberculosis (strain CDC 1551 / Oshkosh), this protein is Alanine racemase (alr).